A 283-amino-acid chain; its full sequence is NADPH-dependent 7-cyano-7-deazaguanine reductase (283 aa).

A substrate-binding site is contributed by 90 to 92; the sequence is IES. 92 to 93 provides a ligand contact to NADPH; sequence SK. Cys190 acts as the Thioimide intermediate in catalysis. Asp197 acts as the Proton donor in catalysis. 229–230 serves as a coordination point for substrate; sequence HE. 258–259 lines the NADPH pocket; that stretch reads RG.

Belongs to the GTP cyclohydrolase I family. QueF type 2 subfamily. Homodimer.

It is found in the cytoplasm. It carries out the reaction 7-aminomethyl-7-carbaguanine + 2 NADP(+) = 7-cyano-7-deazaguanine + 2 NADPH + 3 H(+). It participates in tRNA modification; tRNA-queuosine biosynthesis. Its function is as follows. Catalyzes the NADPH-dependent reduction of 7-cyano-7-deazaguanine (preQ0) to 7-aminomethyl-7-deazaguanine (preQ1). The chain is NADPH-dependent 7-cyano-7-deazaguanine reductase from Dechloromonas aromatica (strain RCB).